The sequence spans 411 residues: GPI-anchor transamidase (411 aa).

The first 22 residues, Met-1 to Ala-22, serve as a signal peptide directing secretion. At Asn-23–Thr-376 the chain is on the lumenal side. Active-site residues include His-157 and Cys-199. Residues Asn-256 and Asn-346 are each glycosylated (N-linked (GlcNAc...) asparagine). A helical membrane pass occupies residues Ser-377–Leu-397. Topologically, residues Arg-398–Asn-411 are cytoplasmic.

Belongs to the peptidase C13 family. As to quaternary structure, forms a complex with CDC91, GPI16, GPI17 and GAA1. Post-translationally, the disulfide bond between GPI8 and GPI16 is important for normal enzyme activity.

The protein resides in the endoplasmic reticulum membrane. Its pathway is glycolipid biosynthesis; glycosylphosphatidylinositol-anchor biosynthesis. In terms of biological role, mediates GPI anchoring in the endoplasmic reticulum, by replacing a protein's C-terminal GPI attachment signal peptide with a pre-assembled GPI. During this transamidation reaction, the GPI transamidase forms a carbonyl intermediate with the substrate protein. This chain is GPI-anchor transamidase (GPI8), found in Saccharomyces cerevisiae (strain ATCC 204508 / S288c) (Baker's yeast).